Consider the following 204-residue polypeptide: Large ribosomal subunit protein eL15 (204 aa).

This sequence belongs to the eukaryotic ribosomal protein eL15 family. In terms of assembly, component of the large ribosomal subunit.

It localises to the cytoplasm. Functionally, component of the large ribosomal subunit. The ribosome is a large ribonucleoprotein complex responsible for the synthesis of proteins in the cell. The sequence is that of Large ribosomal subunit protein eL15 (rpl15) from Megalobrama amblycephala (Chinese blunt snout bream).